A 273-amino-acid chain; its full sequence is Formamidopyrimidine-DNA glycosylase (273 aa).

Proline 2 (schiff-base intermediate with DNA) is an active-site residue. The Proton donor role is filled by glutamate 3. The active-site Proton donor; for beta-elimination activity is lysine 58. Histidine 92, arginine 111, and lysine 153 together coordinate DNA. The segment at 238-272 (KVYGREGQSCLSCSSTIIKIKHSGRSTFYCKTCQY) adopts an FPG-type zinc-finger fold. The Proton donor; for delta-elimination activity role is filled by arginine 262.

The protein belongs to the FPG family. Monomer. Zn(2+) is required as a cofactor.

The catalysed reaction is Hydrolysis of DNA containing ring-opened 7-methylguanine residues, releasing 2,6-diamino-4-hydroxy-5-(N-methyl)formamidopyrimidine.. It carries out the reaction 2'-deoxyribonucleotide-(2'-deoxyribose 5'-phosphate)-2'-deoxyribonucleotide-DNA = a 3'-end 2'-deoxyribonucleotide-(2,3-dehydro-2,3-deoxyribose 5'-phosphate)-DNA + a 5'-end 5'-phospho-2'-deoxyribonucleoside-DNA + H(+). In terms of biological role, involved in base excision repair of DNA damaged by oxidation or by mutagenic agents. Acts as a DNA glycosylase that recognizes and removes damaged bases. Has a preference for oxidized purines, such as 7,8-dihydro-8-oxoguanine (8-oxoG). Has AP (apurinic/apyrimidinic) lyase activity and introduces nicks in the DNA strand. Cleaves the DNA backbone by beta-delta elimination to generate a single-strand break at the site of the removed base with both 3'- and 5'-phosphates. In Rickettsia conorii (strain ATCC VR-613 / Malish 7), this protein is Formamidopyrimidine-DNA glycosylase.